A 25-amino-acid polypeptide reads, in one-letter code: Flagellar filament outer layer protein (25 aa).

As to quaternary structure, the flagellum consists of an outer layer composed of repeating units of FlaA around a core that contains several antigenically related polypeptides.

It localises to the periplasmic flagellum. The protein localises to the periplasm. Functionally, component of the outer layer of the flagella. The protein is Flagellar filament outer layer protein (flaA) of Treponema phagedenis.